The chain runs to 332 residues: Transcription factor ZEB2 (332 aa).

The segment at 1 to 37 (MQSTESFHALPTRSDVEDPNERRKIQNRIAQKKHRQK) is disordered. Residues 14-24 (SDVEDPNERRK) show a composition bias toward basic and acidic residues. Residues 17-50 (EDPNERRKIQNRIAQKKHRQKMKRRIEELETKVN) form the bZIP domain. Positions 21 to 43 (ERRKIQNRIAQKKHRQKMKRRIE) are basic motif. Residues 45–52 (LETKVNNQ) are leucine-zipper. Residues 106–170 (MHDSPRPNQQ…EGSLPTRQHD (65 aa)) are disordered. Positions 111 to 134 (RPNQQQRLSVSGMPSSPTSTSNVA) are enriched in polar residues. A compositionally biased stretch (low complexity) spans 143 to 155 (HSSASNHLSSLSL). Positions 160–170 (TEGSLPTRQHD) are enriched in polar residues.

This sequence belongs to the bZIP family.

The protein localises to the nucleus. Functionally, transcription factor that specifically controls transcription of the zearalenone biosynthesis cluster genes. This is Transcription factor ZEB2 from Gibberella zeae (strain ATCC MYA-4620 / CBS 123657 / FGSC 9075 / NRRL 31084 / PH-1) (Wheat head blight fungus).